Consider the following 161-residue polypeptide: MYMLNESTKEILKKPFGKVYKELPPINRKVNIIAVGDITTKNLLSKSIIPNLSIIDLKTKRNIPVKINHKFKTVFEVNNPQGCISDEAEETIKYISSLDMVDTALIVKDGEEDLLTMMVIRYFPKDTIVLYGQPDEGVVLLTINQDLKHKINNILSMMDKI.

GTP is bound by residues Asp-37, Ile-38, Asp-56, Lys-58, Glu-112, and Asp-135.

It belongs to the GTP-dependent DPCK family.

The catalysed reaction is 3'-dephospho-CoA + GTP = GDP + CoA + H(+). It functions in the pathway cofactor biosynthesis; coenzyme A biosynthesis. Its function is as follows. Catalyzes the GTP-dependent phosphorylation of the 3'-hydroxyl group of dephosphocoenzyme A to form coenzyme A (CoA). This Methanococcus aeolicus (strain ATCC BAA-1280 / DSM 17508 / OCM 812 / Nankai-3) protein is GTP-dependent dephospho-CoA kinase.